We begin with the raw amino-acid sequence, 724 residues long: Long-chain-fatty-acid--CoA ligase ACSBG1 (724 aa).

The interval 1 to 30 is disordered; it reads MPRNSGAGYGCPHGDPSMLDSRETPQESRQ. Positions 20–30 are enriched in basic and acidic residues; the sequence is DSRETPQESRQ. A phosphoserine mark is found at Ser53 and Ser56. ATP contacts are provided by residues 282 to 290, 472 to 477, Asp550, and Arg565; these read TSGTTGNPK and AGYGLS. Tyr658 bears the Phosphotyrosine mark. Position 701 (Lys701) interacts with ATP.

Belongs to the ATP-dependent AMP-binding enzyme family. Bubblegum subfamily. As to expression, expressed primarily in brain. Expressed at lower level in testis and adrenal gland. Present in all regions of brain except pituitary.

It localises to the cytoplasm. The protein localises to the cytoplasmic vesicle. Its subcellular location is the microsome. It is found in the endoplasmic reticulum. The protein resides in the cell membrane. The enzyme catalyses a long-chain fatty acid + ATP + CoA = a long-chain fatty acyl-CoA + AMP + diphosphate. It catalyses the reaction (E)-hexadec-2-enoate + ATP + CoA = (2E)-hexadecenoyl-CoA + AMP + diphosphate. The catalysed reaction is hexadecanoate + ATP + CoA = hexadecanoyl-CoA + AMP + diphosphate. In terms of biological role, catalyzes the conversion of fatty acids such as long-chain and very long-chain fatty acids to their active form acyl-CoAs for both synthesis of cellular lipids, and degradation via beta-oxidation. Can activate diverse saturated, monosaturated and polyunsaturated fatty acids. The polypeptide is Long-chain-fatty-acid--CoA ligase ACSBG1 (Homo sapiens (Human)).